We begin with the raw amino-acid sequence, 245 residues long: NAD(P)H-hydrate epimerase (245 aa).

Residues 21–221 enclose the YjeF N-terminal domain; sequence MREIDRLAVQ…DLGIPPAVYT (201 aa). 72–76 provides a ligand contact to (6S)-NADPHX; that stretch reads GNGGG. 2 residues coordinate K(+): N73 and D135. (6S)-NADPHX is bound by residues 139–145 and D168; that span reads GYSLLGA. S171 lines the K(+) pocket.

It belongs to the NnrE/AIBP family. The cofactor is K(+).

The enzyme catalyses (6R)-NADHX = (6S)-NADHX. The catalysed reaction is (6R)-NADPHX = (6S)-NADPHX. In terms of biological role, catalyzes the epimerization of the S- and R-forms of NAD(P)HX, a damaged form of NAD(P)H that is a result of enzymatic or heat-dependent hydration. This is a prerequisite for the S-specific NAD(P)H-hydrate dehydratase to allow the repair of both epimers of NAD(P)HX. This is NAD(P)H-hydrate epimerase from Dehalogenimonas lykanthroporepellens (strain ATCC BAA-1523 / JCM 15061 / BL-DC-9).